A 447-amino-acid chain; its full sequence is Adenylosuccinate synthetase (447 aa).

GTP contacts are provided by residues 12-18 (GDEGKGK) and 40-42 (GHT). Asp13 (proton acceptor) is an active-site residue. Residues Asp13 and Gly40 each coordinate Mg(2+). IMP-binding positions include 13 to 16 (DEGK), 38 to 41 (NAGH), Thr128, Arg142, Gln223, Thr238, and Arg302. His41 (proton donor) is an active-site residue. Residue 298–304 (TTTGRRR) participates in substrate binding. GTP contacts are provided by residues Arg304, 330–332 (KLD), and 412–414 (SLG).

It belongs to the adenylosuccinate synthetase family. Homodimer. Requires Mg(2+) as cofactor.

It localises to the cytoplasm. It catalyses the reaction IMP + L-aspartate + GTP = N(6)-(1,2-dicarboxyethyl)-AMP + GDP + phosphate + 2 H(+). It participates in purine metabolism; AMP biosynthesis via de novo pathway; AMP from IMP: step 1/2. Functionally, plays an important role in the de novo pathway of purine nucleotide biosynthesis. Catalyzes the first committed step in the biosynthesis of AMP from IMP. This is Adenylosuccinate synthetase from Thermosynechococcus vestitus (strain NIES-2133 / IAM M-273 / BP-1).